A 453-amino-acid chain; its full sequence is Phosphoglucosamine mutase (453 aa).

The Phosphoserine intermediate role is filled by Ser110. Mg(2+)-binding residues include Ser110, Asp248, Asp250, and Asp252. Ser110 is modified (phosphoserine).

It belongs to the phosphohexose mutase family. The cofactor is Mg(2+). Post-translationally, activated by phosphorylation.

The enzyme catalyses alpha-D-glucosamine 1-phosphate = D-glucosamine 6-phosphate. Functionally, catalyzes the conversion of glucosamine-6-phosphate to glucosamine-1-phosphate. In Mycolicibacterium smegmatis (strain ATCC 700084 / mc(2)155) (Mycobacterium smegmatis), this protein is Phosphoglucosamine mutase.